We begin with the raw amino-acid sequence, 316 residues long: Protoheme IX farnesyltransferase (316 aa).

The next 9 membrane-spanning stretches (helical) occupy residues 32–52 (VMSLVIFTALTGVLIAPTHVN), 53–73 (PIIGFASLLAIAAGAGASGAL), 98–118 (VARESALAFGMVLALLSVITL), 120–140 (FVANWAAAALLAFTIFFYVVI), 153–173 (IVIGGAAGAFPPIVAYLAVAG), 180–200 (LALFAIIFVWTPPHFWALALV), 226–246 (ILLYTLLLAPIGMTPYFIGFA), 251–271 (GLLSFGLGGVMILHAVRVYLA), and 280–300 (VAMRMFGFSILYLFLLFAAIV).

The protein belongs to the UbiA prenyltransferase family. Protoheme IX farnesyltransferase subfamily.

The protein resides in the cell inner membrane. It catalyses the reaction heme b + (2E,6E)-farnesyl diphosphate + H2O = Fe(II)-heme o + diphosphate. The protein operates within porphyrin-containing compound metabolism; heme O biosynthesis; heme O from protoheme: step 1/1. In terms of biological role, converts heme B (protoheme IX) to heme O by substitution of the vinyl group on carbon 2 of heme B porphyrin ring with a hydroxyethyl farnesyl side group. In Methylocella silvestris (strain DSM 15510 / CIP 108128 / LMG 27833 / NCIMB 13906 / BL2), this protein is Protoheme IX farnesyltransferase.